The sequence spans 444 residues: Phosphoglucosamine mutase (444 aa).

The active-site Phosphoserine intermediate is Ser104. Mg(2+) contacts are provided by Ser104, Asp243, Asp245, and Asp247. Position 104 is a phosphoserine (Ser104).

It belongs to the phosphohexose mutase family. The cofactor is Mg(2+). Post-translationally, activated by phosphorylation.

It carries out the reaction alpha-D-glucosamine 1-phosphate = D-glucosamine 6-phosphate. Catalyzes the conversion of glucosamine-6-phosphate to glucosamine-1-phosphate. In Neisseria meningitidis serogroup C (strain 053442), this protein is Phosphoglucosamine mutase.